Reading from the N-terminus, the 235-residue chain is Small ribosomal subunit protein uS3 (235 aa).

A KH type-2 domain is found at 39–107; the sequence is VRKFLNKELA…PAQINIAEVK (69 aa).

It belongs to the universal ribosomal protein uS3 family. In terms of assembly, part of the 30S ribosomal subunit. Forms a tight complex with proteins S10 and S14.

Its function is as follows. Binds the lower part of the 30S subunit head. Binds mRNA in the 70S ribosome, positioning it for translation. This is Small ribosomal subunit protein uS3 from Mannheimia succiniciproducens (strain KCTC 0769BP / MBEL55E).